Here is a 603-residue protein sequence, read N- to C-terminus: Trihelix transcription factor DF1 (603 aa).

In terms of domain architecture, Myb-like 1 spans 60–118 (NRWPRQETLALLKIRSDMGIAFRDASVKGPLWEEVSRKMAEHGYIRNAKKCKEKFENVY). Disordered regions lie at residues 149–201 (QSTT…SSIP), 220–249 (LSDN…TRKK), 333–408 (KQPN…SSSR), and 532–603 (QWPP…TNNL). 4 stretches are compositionally biased toward low complexity: residues 168-178 (NNNNNNNNNNN), 189-198 (TTVMPTLPSS), 221-236 (SDNS…TSSD), and 344-362 (PQQV…QQPP). Positions 363-376 (QRSPPPQPPAPLPQ) are enriched in pro residues. Polar residues predominate over residues 381–408 (VVSTLDTTKTDNGGDQNMTPAASASSSR). The Myb-like 2 domain occupies 401-465 (AASASSSRWP…RCKEKWENIN (65 aa)). The segment covering 532 to 555 (QWPPAVTTATTTPAAAQPDQQSQP) has biased composition (low complexity). The segment covering 559–586 (NFDDEEGTDEEYDDEDEEEENEEEEGGE) has biased composition (acidic residues). Residues 593–603 (NNNNNKTTNNL) show a composition bias toward low complexity.

The protein localises to the nucleus. In terms of biological role, transcription repressor that negatively regulates root hair growth by directly binding RSL4 promoter and repressing RSL4 expression. Required for the synthesis of seed coat mucilage. In Arabidopsis thaliana (Mouse-ear cress), this protein is Trihelix transcription factor DF1.